We begin with the raw amino-acid sequence, 56 residues long: Sex-specific storage protein 1 (56 aa).

It belongs to the hemocyanin family. Expressed in fat body and ovary.

It is found in the secreted. Functionally, larval storage protein (LSP) which may serve as a store of amino acids for synthesis of adult proteins. The biosynthesis, accumulation and sequestration of storage protein-1 takes place during metamorphosis and saves energy for the non-feeding pupal stage. May also be essential for egg formation. The sequence is that of Sex-specific storage protein 1 from Amsacta albistriga (Red hairy caterpillar).